The chain runs to 418 residues: Probable endo-beta-1,4-glucanase celB (418 aa).

The N-terminal stretch at 1–18 (MVRTFAVTALALLPLVAA) is a signal peptide. N46, N118, and N136 each carry an N-linked (GlcNAc...) asparagine glycan. Catalysis depends on E215, which acts as the Nucleophile. The Proton donor role is filled by E220. N234 and N291 each carry an N-linked (GlcNAc...) asparagine glycan.

This sequence belongs to the glycosyl hydrolase 7 (cellulase C) family.

The protein resides in the secreted. It carries out the reaction Endohydrolysis of (1-&gt;4)-beta-D-glucosidic linkages in cellulose, lichenin and cereal beta-D-glucans.. In terms of biological role, has endoglucanase activity on substrates containing beta-1,4 glycosidic bonds, like in carboxymethylcellulose (CMC), hydroxyethylcellulose (HEC) and beta-glucan. Involved in the degradation of complex natural cellulosic substrates. This is Probable endo-beta-1,4-glucanase celB (celB) from Aspergillus clavatus (strain ATCC 1007 / CBS 513.65 / DSM 816 / NCTC 3887 / NRRL 1 / QM 1276 / 107).